The chain runs to 220 residues: Ribonuclease P protein component 3 (220 aa).

The protein belongs to the eukaryotic/archaeal RNase P protein component 3 family. As to quaternary structure, consists of a catalytic RNA component and at least 4-5 protein subunits.

Its subcellular location is the cytoplasm. The enzyme catalyses Endonucleolytic cleavage of RNA, removing 5'-extranucleotides from tRNA precursor.. Part of ribonuclease P, a protein complex that generates mature tRNA molecules by cleaving their 5'-ends. This is Ribonuclease P protein component 3 from Thermococcus kodakarensis (strain ATCC BAA-918 / JCM 12380 / KOD1) (Pyrococcus kodakaraensis (strain KOD1)).